The chain runs to 112 residues: Cytochrome c-551 (112 aa).

Residues 1-20 (MKSKLSILMIGFALSVLLAA) form the signal peptide. The N-palmitoyl cysteine moiety is linked to residue cysteine 21. Cysteine 21 carries S-diacylglycerol cysteine lipidation. The span at 25-35 (DAKEEKTDTGS) shows a compositional bias: basic and acidic residues. Residues 25–44 (DAKEEKTDTGSKTEATASEG) form a disordered region. The Cytochrome c domain maps to 39–112 (ATASEGEELY…VIAKWLSEKK (74 aa)). Heme c-binding residues include cysteine 52, cysteine 55, histidine 56, and methionine 91.

In terms of processing, binds 1 heme c group covalently per subunit.

It localises to the cell membrane. Functionally, electron carrier protein. The sequence is that of Cytochrome c-551 (cccB) from Bacillus subtilis (strain 168).